Consider the following 784-residue polypeptide: Cation/H(+) antiporter 26 (784 aa).

A run of 11 helical transmembrane segments spans residues 38–58, 61–81, 97–117, 130–150, 201–221, 240–260, 286–306, 321–341, 351–371, 376–396, and 413–433; these read PLLLLLISLVSSLSSVFQALL, LANVDFVTQILAGIFLGPSAL, YFIIESFEAISFMFISYISTA, LAIINGLSLFLFPYVVGAIAC, LALSSIMVANCFGWGFFLLLI, FTKVLLLVGIVVVCRPIFNWI, TFLSETVGFPYVVGSVALGLV, IGSFCYAVLMPCYVIGIGNKV, IISLEFLIFTISAAKFASIVL, FQVPISHAVIVGFIVCIQGIY, and EAFGIMVISAMVHSTIFTAIV.

This sequence belongs to the monovalent cation:proton antiporter 2 (CPA2) transporter (TC 2.A.37) family. CHX (TC 2.A.37.4) subfamily. In terms of tissue distribution, expressed in pollen.

It localises to the membrane. Functionally, may operate as a cation/H(+) antiporter. The protein is Cation/H(+) antiporter 26 (CHX26) of Arabidopsis thaliana (Mouse-ear cress).